The following is an 84-amino-acid chain: RNA-binding protein Hfq (84 aa).

Residues 9-69 (DRFLNILRTN…VSTIMPESFV (61 aa)) form the Sm domain.

This sequence belongs to the Hfq family. Homohexamer.

In terms of biological role, RNA chaperone that binds small regulatory RNA (sRNAs) and mRNAs to facilitate mRNA translational regulation in response to envelope stress, environmental stress and changes in metabolite concentrations. Also binds with high specificity to tRNAs. In Thermosipho africanus (strain TCF52B), this protein is RNA-binding protein Hfq.